Here is a 324-residue protein sequence, read N- to C-terminus: Olfactory receptor 11H4 (324 aa).

Residues methionine 1–isoleucine 35 lie on the Extracellular side of the membrane. Residue asparagine 12 is glycosylated (N-linked (GlcNAc...) asparagine). Residues phenylalanine 36–isoleucine 56 form a helical membrane-spanning segment. The Cytoplasmic segment spans residues tyrosine 57–leucine 64. The chain crosses the membrane as a helical span at residues leucine 65–serine 85. The Extracellular segment spans residues serine 86–leucine 109. The cysteines at positions 107 and 199 are disulfide-linked. The chain crosses the membrane as a helical span at residues glutamine 110–tyrosine 130. The Cytoplasmic segment spans residues aspartate 131–arginine 149. A helical transmembrane segment spans residues phenylalanine 150 to isoleucine 170. Over phenylalanine 171–cysteine 207 the chain is Extracellular. Residues isoleucine 208–serine 227 form a helical membrane-spanning segment. Residues tyrosine 228 to alanine 247 are Cytoplasmic-facing. A helical transmembrane segment spans residues phenylalanine 248–methionine 268. Residues tyrosine 269–glutamine 281 are Extracellular-facing. The helical transmembrane segment at lysine 282–leucine 302 threads the bilayer. The Cytoplasmic portion of the chain corresponds to arginine 303 to serine 324.

The protein belongs to the G-protein coupled receptor 1 family.

The protein localises to the cell membrane. Its function is as follows. Odorant receptor. The sequence is that of Olfactory receptor 11H4 (OR11H4) from Homo sapiens (Human).